Consider the following 367-residue polypeptide: GTP cyclohydrolase FolE2 (367 aa).

The protein belongs to the GTP cyclohydrolase IV family.

It catalyses the reaction GTP + H2O = 7,8-dihydroneopterin 3'-triphosphate + formate + H(+). The protein operates within cofactor biosynthesis; 7,8-dihydroneopterin triphosphate biosynthesis; 7,8-dihydroneopterin triphosphate from GTP: step 1/1. Converts GTP to 7,8-dihydroneopterin triphosphate. The sequence is that of GTP cyclohydrolase FolE2 from Dinoroseobacter shibae (strain DSM 16493 / NCIMB 14021 / DFL 12).